The primary structure comprises 354 residues: COP9 signalosome complex subunit 5 (354 aa).

The region spanning 56–193 (VLVSSIALVK…IGAFRTYPKD (138 aa)) is the MPN domain. 3 residues coordinate Zn(2+): His-139, His-141, and Asp-152. The JAMM motif signature appears at 139 to 152 (HSHPGYGCWLSGID). The segment at 193-212 (DYKPPKKATKQNQDQSVPLS) is disordered.

The protein belongs to the peptidase M67A family. CSN5 subfamily. Component of the COP9 signalosome (CSN) complex.

Its subcellular location is the cytoplasm. It is found in the nucleus. Catalytic Component of the COP9 signalosome (CSN) complex that acts as an regulator of the ubiquitin (Ubl) conjugation pathway by mediating the deneddylation of the cullin subunit of SCF-type E3 ubiquitin-protein ligase complexes. The protein is COP9 signalosome complex subunit 5 (RRI1) of Yarrowia lipolytica (strain CLIB 122 / E 150) (Yeast).